We begin with the raw amino-acid sequence, 184 residues long: Peptidyl-tRNA hydrolase (184 aa).

Tyr-14 is a binding site for tRNA. Residue His-19 is the Proton acceptor of the active site. TRNA contacts are provided by Phe-60 and Asn-62.

It belongs to the PTH family. Monomer.

Its subcellular location is the cytoplasm. It catalyses the reaction an N-acyl-L-alpha-aminoacyl-tRNA + H2O = an N-acyl-L-amino acid + a tRNA + H(+). Functionally, hydrolyzes ribosome-free peptidyl-tRNAs (with 1 or more amino acids incorporated), which drop off the ribosome during protein synthesis, or as a result of ribosome stalling. Catalyzes the release of premature peptidyl moieties from peptidyl-tRNA molecules trapped in stalled 50S ribosomal subunits, and thus maintains levels of free tRNAs and 50S ribosomes. This Mesomycoplasma hyopneumoniae (strain 232) (Mycoplasma hyopneumoniae) protein is Peptidyl-tRNA hydrolase.